We begin with the raw amino-acid sequence, 92 residues long: PqqA binding protein (92 aa).

It belongs to the PqqD family. Monomer. Interacts with PqqE.

Its pathway is cofactor biosynthesis; pyrroloquinoline quinone biosynthesis. In terms of biological role, functions as a PqqA binding protein and presents PqqA to PqqE, in the pyrroloquinoline quinone (PQQ) biosynthetic pathway. This chain is PqqA binding protein, found in Xanthomonas oryzae pv. oryzae (strain MAFF 311018).